Here is a 170-residue protein sequence, read N- to C-terminus: Peptide deformylase (170 aa).

Fe cation is bound by residues cysteine 94 and histidine 136. Glutamate 137 is a catalytic residue. Histidine 140 provides a ligand contact to Fe cation.

The protein belongs to the polypeptide deformylase family. Fe(2+) is required as a cofactor.

The enzyme catalyses N-terminal N-formyl-L-methionyl-[peptide] + H2O = N-terminal L-methionyl-[peptide] + formate. Functionally, removes the formyl group from the N-terminal Met of newly synthesized proteins. Requires at least a dipeptide for an efficient rate of reaction. N-terminal L-methionine is a prerequisite for activity but the enzyme has broad specificity at other positions. This chain is Peptide deformylase, found in Xylella fastidiosa (strain 9a5c).